An 80-amino-acid polypeptide reads, in one-letter code: Translational regulator CsrA (80 aa).

Belongs to the CsrA/RsmA family. Homodimer; the beta-strands of each monomer intercalate to form a hydrophobic core, while the alpha-helices form wings that extend away from the core.

It localises to the cytoplasm. A translational regulator that binds mRNA to regulate translation initiation and/or mRNA stability. Usually binds in the 5'-UTR at or near the Shine-Dalgarno sequence preventing ribosome-binding, thus repressing translation. Its main target seems to be the major flagellin gene, while its function is anatagonized by FliW. The sequence is that of Translational regulator CsrA from Desulforamulus reducens (strain ATCC BAA-1160 / DSM 100696 / MI-1) (Desulfotomaculum reducens).